We begin with the raw amino-acid sequence, 481 residues long: MDLSNLTLTKIQELVLTKKCKIYDILLAYKNNYELNKDINGYIEFFDDSLDIAKRYDDCLKNCELEDLPLIGMPIAVKDNISIQDKSLTCASEILKGYISPYDATVIKRLKNKGAILIGKTNMDEFAMGSTGEFSCYGATLNPLNREYVIGGSSGGSAAVVASFQAPFSLGSDTGGSVRLPASFSGILGFKPSYGGLSRYGLASYASSFDQIGFFSHSIEDIALILKHTCGADKMDSTSVDIFDDFYPLKTEPLQGKNLALIKELSEDLMDKNVASSFAKFKFDLLSKGANIKEVSIEEINFILSIYYTISPVEASSNLARYTGLCYGKRISENLSLNDFYFKHRSNFLSEEVKRRIILGNYLLSEGYDAKYYAKACEILQNLIIPKFNKLFESCDFIITPTSFVKPFRVGLDFDDPVKMYYSDICTVIANLIGAPAISLPYSKDKEGLSIGMQIIGRSKKDFELLSFSKNVIRELGLNGI.

Catalysis depends on charge relay system residues Lys78 and Ser153. Catalysis depends on Ser177, which acts as the Acyl-ester intermediate.

It belongs to the amidase family. GatA subfamily. As to quaternary structure, heterotrimer of A, B and C subunits.

It carries out the reaction L-glutamyl-tRNA(Gln) + L-glutamine + ATP + H2O = L-glutaminyl-tRNA(Gln) + L-glutamate + ADP + phosphate + H(+). Its function is as follows. Allows the formation of correctly charged Gln-tRNA(Gln) through the transamidation of misacylated Glu-tRNA(Gln) in organisms which lack glutaminyl-tRNA synthetase. The reaction takes place in the presence of glutamine and ATP through an activated gamma-phospho-Glu-tRNA(Gln). The polypeptide is Glutamyl-tRNA(Gln) amidotransferase subunit A (Borrelia garinii subsp. bavariensis (strain ATCC BAA-2496 / DSM 23469 / PBi) (Borreliella bavariensis)).